The sequence spans 545 residues: Methionine--tRNA ligase (545 aa).

Positions 12 to 22 (PYANGSLHIGH) match the 'HIGH' region motif. Zn(2+) contacts are provided by Cys143, Cys146, Cys156, and Cys159. The short motif at 329 to 333 (KLSKS) is the 'KMSKS' region element. Lys332 lines the ATP pocket.

It belongs to the class-I aminoacyl-tRNA synthetase family. MetG type 1 subfamily. In terms of assembly, monomer. It depends on Zn(2+) as a cofactor.

The protein localises to the cytoplasm. It catalyses the reaction tRNA(Met) + L-methionine + ATP = L-methionyl-tRNA(Met) + AMP + diphosphate. Is required not only for elongation of protein synthesis but also for the initiation of all mRNA translation through initiator tRNA(fMet) aminoacylation. The sequence is that of Methionine--tRNA ligase (metG) from Buchnera aphidicola subsp. Baizongia pistaciae (strain Bp).